A 634-amino-acid polypeptide reads, in one-letter code: Threonine--tRNA ligase (634 aa).

The region spanning 1–61 is the TGS domain; it reads MINIRFPDGS…NSNCELRLIT (61 aa). Positions 241-532 are catalytic; the sequence is DHRKIGKVLD…LIEHYAGNLP (292 aa). Zn(2+)-binding residues include cysteine 332, histidine 383, and histidine 509.

The protein belongs to the class-II aminoacyl-tRNA synthetase family. Homodimer. Zn(2+) serves as cofactor.

The protein resides in the cytoplasm. It catalyses the reaction tRNA(Thr) + L-threonine + ATP = L-threonyl-tRNA(Thr) + AMP + diphosphate + H(+). Its function is as follows. Catalyzes the attachment of threonine to tRNA(Thr) in a two-step reaction: L-threonine is first activated by ATP to form Thr-AMP and then transferred to the acceptor end of tRNA(Thr). Also edits incorrectly charged L-seryl-tRNA(Thr). The chain is Threonine--tRNA ligase from Francisella tularensis subsp. holarctica (strain OSU18).